The chain runs to 194 residues: Molybdenum cofactor guanylyltransferase (194 aa).

Residues 12 to 14 (LAG), K25, N53, D70, and D100 contribute to the GTP site. Mg(2+) is bound at residue D100.

The protein belongs to the MobA family. In terms of assembly, monomer. Mg(2+) is required as a cofactor.

The protein resides in the cytoplasm. It carries out the reaction Mo-molybdopterin + GTP + H(+) = Mo-molybdopterin guanine dinucleotide + diphosphate. Its function is as follows. Transfers a GMP moiety from GTP to Mo-molybdopterin (Mo-MPT) cofactor (Moco or molybdenum cofactor) to form Mo-molybdopterin guanine dinucleotide (Mo-MGD) cofactor. The protein is Molybdenum cofactor guanylyltransferase of Photobacterium profundum (strain SS9).